The primary structure comprises 57 residues: uncharacterized protein (57 aa).

The helical transmembrane segment at 4-26 threads the bilayer; that stretch reads FMPIRVFLYSYVIINSLLSSFFH.

Its subcellular location is the membrane. This is an uncharacterized protein from Saccharomyces cerevisiae (strain ATCC 204508 / S288c) (Baker's yeast).